The chain runs to 157 residues: Protein-export protein SecB (157 aa).

The protein belongs to the SecB family. In terms of assembly, homotetramer, a dimer of dimers. One homotetramer interacts with 1 SecA dimer.

The protein localises to the cytoplasm. In terms of biological role, one of the proteins required for the normal export of preproteins out of the cell cytoplasm. It is a molecular chaperone that binds to a subset of precursor proteins, maintaining them in a translocation-competent state. It also specifically binds to its receptor SecA. This Shewanella oneidensis (strain ATCC 700550 / JCM 31522 / CIP 106686 / LMG 19005 / NCIMB 14063 / MR-1) protein is Protein-export protein SecB.